The sequence spans 101 residues: NADH-quinone oxidoreductase subunit K (101 aa).

The next 3 membrane-spanning stretches (helical) occupy residues 4–24, 30–50, and 61–81; these read LSHYLVLGAILFAISVVGIFL, IVLLMAIELMLLAVNLNFIAF, and IFVFFILTVAAAESAIGLAIL.

The protein belongs to the complex I subunit 4L family. NDH-1 is composed of 14 different subunits. Subunits NuoA, H, J, K, L, M, N constitute the membrane sector of the complex.

It is found in the cell inner membrane. It catalyses the reaction a quinone + NADH + 5 H(+)(in) = a quinol + NAD(+) + 4 H(+)(out). Its function is as follows. NDH-1 shuttles electrons from NADH, via FMN and iron-sulfur (Fe-S) centers, to quinones in the respiratory chain. The immediate electron acceptor for the enzyme in this species is believed to be ubiquinone. Couples the redox reaction to proton translocation (for every two electrons transferred, four hydrogen ions are translocated across the cytoplasmic membrane), and thus conserves the redox energy in a proton gradient. The protein is NADH-quinone oxidoreductase subunit K of Aromatoleum aromaticum (strain DSM 19018 / LMG 30748 / EbN1) (Azoarcus sp. (strain EbN1)).